Consider the following 590-residue polypeptide: MHRYRSHTCGALRDSHIDQTVRLSGWCHRIRDHGGVLFIDLRDHYGLTQCVADPDSPAFALAEKLRSEWVVRIDGKARRRPAGTENPELPTGDVEIYVTEIEVLGPAAELPLPVFGEQEYPEDIRLKYRFLDLRRENLHQNIMTRGAIVDSMRKRMKEQGFFEFQTPILTASSPEGARDFLVPSRIHPGKFYALPQAPQQYKQLLMMSGFDRYFQIAPCFRDEDPRADRLPGEFYQLDLEMSFVEQDDVFAAVEPVITGVFEEFAKGKPVTRNWPRIPFAESLRKYGTDKPDLRNPLLMQDVSEHFRGSGFKVFARMLEDSKNQVWAIPGPGGGSRAFCDRMNSWAQGEGQPGLGYIMWREGGEGAGPLANNIGPERTEAIRVQLGLKAGDAAFFVAGDPAKFWKFAGLARTRLGEELNLIDKDRFELAWIVDFPMYEYNEEDKKVDFSHNPFSMPQGGLDALNTQDPLTIKAFQYDITCNGYEIASGGIRNHRPEAMVKAFEIAGYGENDVVERFGGMYRAFQYGAPPHGGMAAGVDRIVMLLCGTNNLREISLFPMNQRAEDLLMGAPSEVAPKQLRELHIRLNLPQN.

Glu175 provides a ligand contact to L-aspartate. Positions 199–202 are aspartate; sequence QQYK. L-aspartate-binding residues include Arg221 and His450. 221-223 provides a ligand contact to ATP; the sequence is RDE. Position 484 (Glu484) interacts with ATP. Arg491 serves as a coordination point for L-aspartate. 536–539 contacts ATP; the sequence is GVDR.

It belongs to the class-II aminoacyl-tRNA synthetase family. Type 1 subfamily. In terms of assembly, homodimer.

It is found in the cytoplasm. It carries out the reaction tRNA(Asx) + L-aspartate + ATP = L-aspartyl-tRNA(Asx) + AMP + diphosphate. Functionally, aspartyl-tRNA synthetase with relaxed tRNA specificity since it is able to aspartylate not only its cognate tRNA(Asp) but also tRNA(Asn). Reaction proceeds in two steps: L-aspartate is first activated by ATP to form Asp-AMP and then transferred to the acceptor end of tRNA(Asp/Asn). The chain is Aspartate--tRNA(Asp/Asn) ligase from Nitrobacter winogradskyi (strain ATCC 25391 / DSM 10237 / CIP 104748 / NCIMB 11846 / Nb-255).